We begin with the raw amino-acid sequence, 649 residues long: Leucine-rich repeat transmembrane protein FLRT3 (649 aa).

Positions 1 to 28 (MISPAWSIFLIGTKIGLFLQVAPLSVMA) are cleaved as a signal peptide. An LRRNT domain is found at 29-58 (KSCPSVCRCDAGFIYCNDRFLTSIPTGIPE). Topologically, residues 29–528 (KSCPSVCRCD…KEPYKNPNLP (500 aa)) are extracellular. Disulfide bonds link Cys-31-Cys-37 and Cys-35-Cys-44. The segment at 38–67 (DAGFIYCNDRFLTSIPTGIPEDATTLYLQN) is interaction with ADGRL3. LRR repeat units lie at residues 59–80 (DATT…SDLK), 84–104 (KVER…NLPK), 105–126 (YVKE…SLSK), 129–150 (YLEE…EGAF), 155–176 (YLRL…LPRT), 177–197 (IEEL…SLQG), 200–220 (SLKR…GDKV), 226–247 (NLTE…LPGT), 248–269 (NLRK…AFSY), and 272–293 (QLYR…IFDD). The N-linked (GlcNAc...) asparagine glycan is linked to Asn-226. 2 N-linked (GlcNAc...) asparagine glycosylation sites follow: Asn-282 and Asn-296. An LRRCT domain is found at 305-357 (NPWYCGCKMKWVRDWLQSLPVKVNVRGLMCQAPEKVRGMAIKDLNAELFDCKD). Cys-309 and Cys-334 are disulfide-bonded. The tract at residues 385 to 407 (VTKQPDIKNPKLTKDHQTTGSPS) is disordered. Residues 389–401 (PDIKNPKLTKDHQ) are compositionally biased toward basic and acidic residues. The 96-residue stretch at 409–504 (KTITITVKSV…VCIETETAPL (96 aa)) folds into the Fibronectin type-III domain. Residues 529–549 (LAAIIGGAVALVTIALLALVC) traverse the membrane as a helical segment. Residues 550–649 (WYVHRNGSLF…GIPDSDHSHS (100 aa)) are Cytoplasmic-facing. Residues 622 to 649 (LYKNNHSESSSNRSYRDSGIPDSDHSHS) are disordered.

As to quaternary structure, monomer and homodimer. Self-associates (via leucine-rich repeats), giving rise to homooligomers. Interacts with FGFR1. Interacts (via extracellular domain) with ADGRL1/LPHN1 and LPHN2 (via olfactomedin-like domain). Interacts (via extracellular domain) with ADGRL3 (via olfactomedin-like domain); the interaction is direct. Interacts (via extracellular domain) with UNC5B and UNC5D (via extracellular domain); the interaction is direct. Identified in complexes composed of FLRT3, ADGRL3 and UNC5B, respectively FLRT3, ADGRL3 and UNC5D. May also interact (via extracellular domain) with UNC5A and UNC5C. Interacts (via cytoplasmic domain) with ROBO1. Post-translationally, N-glycosylated. Proteolytic cleavage in the juxtamembrane region gives rise to a soluble ectodomain. Cleavage is probably effected by a metalloprotease.

It localises to the cell membrane. The protein resides in the presynaptic cell membrane. Its subcellular location is the endoplasmic reticulum membrane. The protein localises to the cell junction. It is found in the focal adhesion. It localises to the secreted. The protein resides in the cell projection. Its subcellular location is the axon. The protein localises to the growth cone membrane. Functions in cell-cell adhesion, cell migration and axon guidance, exerting an attractive or repulsive role depending on its interaction partners. Plays a role in the spatial organization of brain neurons. Plays a role in vascular development in the retina. Plays a role in cell-cell adhesion via its interaction with ADGRL3 and probably also other latrophilins that are expressed at the surface of adjacent cells. Interaction with the intracellular domain of ROBO1 mediates axon attraction towards cells expressing NTN1. Mediates axon growth cone collapse and plays a repulsive role in neuron guidance via its interaction with UNC5B, and possibly also other UNC-5 family members. Promotes neurite outgrowth (in vitro). Mediates cell-cell contacts that promote an increase both in neurite number and in neurite length. Plays a role in the regulation of the density of glutamaergic synapses. Plays a role in fibroblast growth factor-mediated signaling cascades. Required for normal morphogenesis during embryonic development, but not for normal embryonic patterning. Required for normal ventral closure, headfold fusion and definitive endoderm migration during embryonic development. Required for the formation of a normal basement membrane and the maintenance of a normal anterior visceral endoderm during embryonic development. The protein is Leucine-rich repeat transmembrane protein FLRT3 (FLRT3) of Pongo abelii (Sumatran orangutan).